The chain runs to 180 residues: F17 fimbrial protein (180 aa).

Positions 1–21 (MQKIQFILGILAAASSSATLA) are cleaved as a signal peptide. The cysteines at positions 37 and 77 are disulfide-linked.

It belongs to the fimbrial protein family.

It localises to the fimbrium. Functionally, fimbriae (also called pili), polar filaments radiating from the surface of the bacterium to a length of 0.5-1.5 micrometers and numbering 100-300 per cell, enable bacteria to colonize the epithelium of specific host organs. This Escherichia coli protein is F17 fimbrial protein (F17a-A).